The following is a 297-amino-acid chain: Small ribosomal subunit biogenesis GTPase RsgA (297 aa).

A CP-type G domain is found at 65–223; the sequence is INEIGRPAVA…IADTPGFSAI (159 aa). GTP is bound by residues 114-117 and 166-174; these read SKSD and GQSGAGKST. Zn(2+)-binding residues include cysteine 247, cysteine 252, histidine 254, and cysteine 260.

The protein belongs to the TRAFAC class YlqF/YawG GTPase family. RsgA subfamily. As to quaternary structure, monomer. Associates with 30S ribosomal subunit, binds 16S rRNA. It depends on Zn(2+) as a cofactor.

It localises to the cytoplasm. In terms of biological role, one of several proteins that assist in the late maturation steps of the functional core of the 30S ribosomal subunit. Helps release RbfA from mature subunits. May play a role in the assembly of ribosomal proteins into the subunit. Circularly permuted GTPase that catalyzes slow GTP hydrolysis, GTPase activity is stimulated by the 30S ribosomal subunit. This Lactobacillus johnsonii (strain CNCM I-12250 / La1 / NCC 533) protein is Small ribosomal subunit biogenesis GTPase RsgA.